A 205-amino-acid chain; its full sequence is Orotate phosphoribosyltransferase (205 aa).

116-124 (EDIITTGGS) serves as a coordination point for 5-phospho-alpha-D-ribose 1-diphosphate. The orotate site is built by Thr120 and Arg148.

This sequence belongs to the purine/pyrimidine phosphoribosyltransferase family. PyrE subfamily. As to quaternary structure, homodimer. Mg(2+) serves as cofactor.

The catalysed reaction is orotidine 5'-phosphate + diphosphate = orotate + 5-phospho-alpha-D-ribose 1-diphosphate. Its pathway is pyrimidine metabolism; UMP biosynthesis via de novo pathway; UMP from orotate: step 1/2. Catalyzes the transfer of a ribosyl phosphate group from 5-phosphoribose 1-diphosphate to orotate, leading to the formation of orotidine monophosphate (OMP). This Wolinella succinogenes (strain ATCC 29543 / DSM 1740 / CCUG 13145 / JCM 31913 / LMG 7466 / NCTC 11488 / FDC 602W) (Vibrio succinogenes) protein is Orotate phosphoribosyltransferase.